Reading from the N-terminus, the 283-residue chain is 2-dehydro-3-deoxyphosphooctonate aldolase (283 aa).

It belongs to the KdsA family.

It localises to the cytoplasm. The enzyme catalyses D-arabinose 5-phosphate + phosphoenolpyruvate + H2O = 3-deoxy-alpha-D-manno-2-octulosonate-8-phosphate + phosphate. It participates in carbohydrate biosynthesis; 3-deoxy-D-manno-octulosonate biosynthesis; 3-deoxy-D-manno-octulosonate from D-ribulose 5-phosphate: step 2/3. The protein operates within bacterial outer membrane biogenesis; lipopolysaccharide biosynthesis. In Synechococcus sp. (strain WH7803), this protein is 2-dehydro-3-deoxyphosphooctonate aldolase.